Reading from the N-terminus, the 284-residue chain is Acetyl-coenzyme A carboxylase carboxyl transferase subunit beta (284 aa).

A CoA carboxyltransferase N-terminal domain is found at 25–284; the sequence is LWTKCPKCES…ICRMLLQKSA (260 aa). Positions 29, 32, 48, and 51 each coordinate Zn(2+). The C4-type zinc-finger motif lies at 29-51; sequence CPKCESTLYRAEVRRNLEVCPKC.

Belongs to the AccD/PCCB family. Acetyl-CoA carboxylase is a heterohexamer composed of biotin carboxyl carrier protein (AccB), biotin carboxylase (AccC) and two subunits each of ACCase subunit alpha (AccA) and ACCase subunit beta (AccD). It depends on Zn(2+) as a cofactor.

The protein localises to the cytoplasm. The enzyme catalyses N(6)-carboxybiotinyl-L-lysyl-[protein] + acetyl-CoA = N(6)-biotinyl-L-lysyl-[protein] + malonyl-CoA. It participates in lipid metabolism; malonyl-CoA biosynthesis; malonyl-CoA from acetyl-CoA: step 1/1. Its function is as follows. Component of the acetyl coenzyme A carboxylase (ACC) complex. Biotin carboxylase (BC) catalyzes the carboxylation of biotin on its carrier protein (BCCP) and then the CO(2) group is transferred by the transcarboxylase to acetyl-CoA to form malonyl-CoA. In Hydrogenovibrio crunogenus (strain DSM 25203 / XCL-2) (Thiomicrospira crunogena), this protein is Acetyl-coenzyme A carboxylase carboxyl transferase subunit beta.